Reading from the N-terminus, the 546-residue chain is Amidophosphoribosyltransferase (546 aa).

A compositionally biased stretch (low complexity) spans 1-26 (MSAPQQQQQSQQKQQQHVRVVEQQQV). Positions 1-39 (MSAPQQQQQSQQKQQQHVRVVEQQQVEPAEAVTSSMESE) are disordered. Positions 1-53 (MSAPQQQQQSQQKQQQHVRVVEQQQVEPAEAVTSSMESESISASKELTGLTHE) are excised as a propeptide. The active-site Nucleophile is Cys54. In terms of domain architecture, Glutamine amidotransferase type-2 spans 54–302 (CGVFGAIACG…PGEIVELSRS (249 aa)). Position 113 is a phosphoserine (Ser113). Thr114 is subject to Phosphothreonine. Phosphoserine is present on Ser120. Cys321 is a binding site for [4Fe-4S] cluster. 3 residues coordinate Mg(2+): Ser368, Asp430, and Asp431. [4Fe-4S] cluster contacts are provided by Cys467, Cys528, and Cys531.

In the C-terminal section; belongs to the purine/pyrimidine phosphoribosyltransferase family. Requires Mg(2+) as cofactor. It depends on [4Fe-4S] cluster as a cofactor.

It catalyses the reaction 5-phospho-beta-D-ribosylamine + L-glutamate + diphosphate = 5-phospho-alpha-D-ribose 1-diphosphate + L-glutamine + H2O. It functions in the pathway purine metabolism; IMP biosynthesis via de novo pathway; N(1)-(5-phospho-D-ribosyl)glycinamide from 5-phospho-alpha-D-ribose 1-diphosphate: step 1/2. Involved in the first step (and regulatory point) of the de novo biosynthesis of purine nucleotides, where it catalyzes the transfer of glutamine amide to 5-phospho-alpha-D-ribose 1-diphosphate. This Drosophila melanogaster (Fruit fly) protein is Amidophosphoribosyltransferase (Prat).